A 208-amino-acid polypeptide reads, in one-letter code: Histone H1t (208 aa).

A compositionally biased stretch (polar residues) spans 1 to 12 (MSETAPAASSTL). The disordered stretch occupies residues 1–39 (MSETAPAASSTLVPAPVEKPATKRRGKKPGMATARKPRG). Phosphoserine is present on Ser9. The 74-residue stretch at 38–111 (RGFSVSKLIP…GASGSFKLSK (74 aa)) folds into the H15 domain. Arg56 is subject to Citrulline. The disordered stretch occupies residues 93–208 (GVLVQTKGTG…TDLRKAAGRK (116 aa)). Residues 121–134 (KGKKSASAKAKKLG) show a composition bias toward basic residues. Ser141 bears the Phosphoserine mark. The segment covering 143–154 (KSSKTKVVKKPK) has biased composition (basic residues). Thr156 is subject to Phosphothreonine. Residues Ser163, Ser178, and Ser187 each carry the phosphoserine modification. Residues 199–208 (TDLRKAAGRK) show a composition bias toward basic and acidic residues.

It belongs to the histone H1/H5 family. Phosphorylated in early spermatids. In terms of processing, citrullination at Arg-56 (H1R54ci) by PADI4 takes place within the DNA-binding site of H1 and results in its displacement from chromatin and global chromatin decondensation, thereby promoting pluripotency and stem cell maintenance. Testis-specific. Expressed in pachytene spermatocytes during meiotic prophase I.

The protein resides in the nucleus. It is found in the chromosome. Testis-specific histone H1 that forms less compacted chromatin compared to other H1 histone subtypes. Formation of more relaxed chromatin may be required to promote chromatin architecture required for proper chromosome regulation during meiosis, such as homologous recombination. Histones H1 act as linkers that bind to nucleosomes and compact polynucleosomes into a higher-order chromatin configuration. In Rattus norvegicus (Rat), this protein is Histone H1t.